The primary structure comprises 368 residues: D-alanine--D-alanine ligase (368 aa).

An ATP-grasp domain is found at 145–348 (KRLLQGAGLH…YQDLITTLIE (204 aa)). 175–230 (ADQLGLPLFIKPANQGSSVGVNKATTEAEFTAAIEEAFSYDHKVLIEAAIKGREIE) contributes to the ATP binding site. Mg(2+) contacts are provided by Asp-302, Glu-315, and Asn-317.

Belongs to the D-alanine--D-alanine ligase family. The cofactor is Mg(2+). Requires Mn(2+) as cofactor.

It localises to the cytoplasm. It catalyses the reaction 2 D-alanine + ATP = D-alanyl-D-alanine + ADP + phosphate + H(+). Its pathway is cell wall biogenesis; peptidoglycan biosynthesis. Its function is as follows. Cell wall formation. This Shouchella clausii (strain KSM-K16) (Alkalihalobacillus clausii) protein is D-alanine--D-alanine ligase.